Consider the following 552-residue polypeptide: CTP synthase (552 aa).

Residues M1–L271 are amidoligase domain. S18 provides a ligand contact to CTP. S18 is a binding site for UTP. Residues S19–L24 and D76 each bind ATP. Residues D76 and E145 each contribute to the Mg(2+) site. CTP contacts are provided by residues D152–E154, K192–Q197, and K228. UTP-binding positions include K192–Q197 and K228. The 251-residue stretch at T296–G546 folds into the Glutamine amidotransferase type-1 domain. G359 contributes to the L-glutamine binding site. Residue C386 is the Nucleophile; for glutamine hydrolysis of the active site. L-glutamine contacts are provided by residues L387 to Q390, E410, and R472. Residues H519 and E521 contribute to the active site.

The protein belongs to the CTP synthase family. Homotetramer.

The enzyme catalyses UTP + L-glutamine + ATP + H2O = CTP + L-glutamate + ADP + phosphate + 2 H(+). The catalysed reaction is L-glutamine + H2O = L-glutamate + NH4(+). It carries out the reaction UTP + NH4(+) + ATP = CTP + ADP + phosphate + 2 H(+). Its pathway is pyrimidine metabolism; CTP biosynthesis via de novo pathway; CTP from UDP: step 2/2. Allosterically activated by GTP, when glutamine is the substrate; GTP has no effect on the reaction when ammonia is the substrate. The allosteric effector GTP functions by stabilizing the protein conformation that binds the tetrahedral intermediate(s) formed during glutamine hydrolysis. Inhibited by the product CTP, via allosteric rather than competitive inhibition. Functionally, catalyzes the ATP-dependent amination of UTP to CTP with either L-glutamine or ammonia as the source of nitrogen. Regulates intracellular CTP levels through interactions with the four ribonucleotide triphosphates. The chain is CTP synthase from Thermobifida fusca (strain YX).